We begin with the raw amino-acid sequence, 63 residues long: Large ribosomal subunit protein bL35 (63 aa).

This sequence belongs to the bacterial ribosomal protein bL35 family.

This chain is Large ribosomal subunit protein bL35, found in Campylobacter jejuni subsp. jejuni serotype O:2 (strain ATCC 700819 / NCTC 11168).